A 78-amino-acid polypeptide reads, in one-letter code: Large ribosomal subunit protein bL28 (78 aa).

Belongs to the bacterial ribosomal protein bL28 family.

This chain is Large ribosomal subunit protein bL28, found in Alcanivorax borkumensis (strain ATCC 700651 / DSM 11573 / NCIMB 13689 / SK2).